We begin with the raw amino-acid sequence, 372 residues long: uncharacterized protein (372 aa).

Positions 49–72 (FSHKGGGKGGGSGAGSNDGGCSGE) are disordered. Positions 55–70 (GKGGGSGAGSNDGGCS) are enriched in gly residues.

This is an uncharacterized protein from Halorubrum lacusprofundi (strain ATCC 49239 / DSM 5036 / JCM 8891 / ACAM 34).